Here is a 331-residue protein sequence, read N- to C-terminus: L-lactate dehydrogenase A chain (331 aa).

NAD(+) contacts are provided by residues 29–57 and arginine 98; that span reads GMVG…MEDK. Substrate contacts are provided by arginine 105, asparagine 137, and arginine 168. Asparagine 137 contacts NAD(+). Residue histidine 192 is the Proton acceptor of the active site. Position 247 (threonine 247) interacts with substrate.

It belongs to the LDH/MDH superfamily. LDH family. In terms of assembly, homotetramer.

It localises to the cytoplasm. The enzyme catalyses (S)-lactate + NAD(+) = pyruvate + NADH + H(+). Its pathway is fermentation; pyruvate fermentation to lactate; (S)-lactate from pyruvate: step 1/1. In terms of biological role, interconverts simultaneously and stereospecifically pyruvate and lactate with concomitant interconversion of NADH and NAD(+). This is L-lactate dehydrogenase A chain (ldha) from Paranotothenia magellanica (Maori cod).